The following is a 210-amino-acid chain: dTTP/UTP pyrophosphatase (210 aa).

Asp-85 functions as the Proton acceptor in the catalytic mechanism.

It belongs to the Maf family. YhdE subfamily. It depends on a divalent metal cation as a cofactor.

The protein localises to the cytoplasm. The catalysed reaction is dTTP + H2O = dTMP + diphosphate + H(+). It catalyses the reaction UTP + H2O = UMP + diphosphate + H(+). In terms of biological role, nucleoside triphosphate pyrophosphatase that hydrolyzes dTTP and UTP. May have a dual role in cell division arrest and in preventing the incorporation of modified nucleotides into cellular nucleic acids. The polypeptide is dTTP/UTP pyrophosphatase (Saccharophagus degradans (strain 2-40 / ATCC 43961 / DSM 17024)).